The following is a 284-amino-acid chain: N-methyltransferase sirN (284 aa).

The protein belongs to the methyltransferase superfamily. LaeA methyltransferase family.

It participates in mycotoxin biosynthesis. Its function is as follows. N-methyltransferase; part of the gene cluster that mediates the biosynthesis of sirodesmin PL, an epipolythiodioxopiperazine (ETP) characterized by a disulfide bridged cyclic dipeptide and that acts as a phytotoxin which is involved in the blackleg didease of canola. SirD catalyzes the O-prenylation of L-tyrosine (L-Tyr) in the presence of dimethylallyl diphosphate (DMAPP) to yield 4-O-dimethylallyl-L-Tyr, and therefore represents probably the first pathway-specific enzyme in the biosynthesis of sirodesmin PL. 4-O-dimethylallyl-L-Tyr, then undergoes condensation with L-Ser in a reaction catalyzed by the non-ribosomal peptide synthase sirP to form the diketopiperazine (DKP) backbone. Further bishydroxylation of the DKP performed by the cytochrome P450 monooxygenase sirC leads to the production of the intermediate phomamide. This step is essential to form the reactive thiol group required for toxicity of sirodesmin PL. The next steps of sirodesmin biosynthesis are not well understood yet but some predictions could be made from intermediate compounds identification. Phomamide is converted into phomalizarine via oxidation, probably by sirT. Further oxidation, methylation (by sirM or sirN) and reduction steps convert phomalizarine to deacetyl sirodesmin. Finally, acetyltransferase sirH probably acetylates deacetyl sirodesmin to produce sirodesmin PL. The polypeptide is N-methyltransferase sirN (Leptosphaeria maculans (Blackleg fungus)).